The following is a 229-amino-acid chain: Potassium/proton antiporter CemA (229 aa).

4 consecutive transmembrane segments (helical) span residues 7-27, 114-134, 154-174, and 189-209; these read FTPLLYLVSIVFLPWWLSLSF, IICFVILSGFSILGNEELVIL, ILLLTDLCIGFHSPHGWELMV, and IISGLVSTFPVILDTIFKYWI.

It belongs to the CemA family.

The protein localises to the plastid. Its subcellular location is the chloroplast inner membrane. The catalysed reaction is K(+)(in) + H(+)(out) = K(+)(out) + H(+)(in). Its function is as follows. Contributes to K(+)/H(+) antiport activity by supporting proton efflux to control proton extrusion and homeostasis in chloroplasts in a light-dependent manner to modulate photosynthesis. Prevents excessive induction of non-photochemical quenching (NPQ) under continuous-light conditions. Indirectly promotes efficient inorganic carbon uptake into chloroplasts. The chain is Potassium/proton antiporter CemA from Coffea arabica (Arabian coffee).